The following is a 1072-amino-acid chain: Neurofilament heavy polypeptide (1072 aa).

A Phosphoserine modification is found at S74. Residues 94-409 (EKEQLQALND…KLLEGEECRI (316 aa)) form the IF rod domain. Coiled coils occupy residues 98–132 (LQAL…LRQQ), 174–222 (IAHV…LQEE), and 293–380 (LDRL…QLRE). A 55 X 6 AA approximate tandem repeats of K-S-P-[VAGSE]-[KEVTSGA]-[EAVK] region spans residues 278-643 (TVQSTLQSEE…AKSPAEAKSP (366 aa)). Phosphoserine is present on residues S343, S414, and S417. Residues 454–1072 (EEQTEEIQVT…PEDKAAKGDK (619 aa)) are disordered. Residues 455 to 487 (EQTEEIQVTEEVTEEEDKEAQGEEEEEAEEGGE) show a composition bias toward acidic residues. Residues 488–499 (EAATTSPPAEEA) show a composition bias toward low complexity. S501 is modified (phosphoserine). The span at 501-584 (SPEKETKSPV…KSPAEAKSPA (84 aa)) shows a compositional bias: basic and acidic residues. A run of 36 repeats spans residues 507–512 (KSPVKE), 515–520 (KSPAEA), 521–526 (KSPAEA), 527–532 (KSPAEA), 533–538 (KSPAEV), 539–544 (KSPAEV), 545–550 (KSPAEA), 551–556 (KSPAEA), 557–562 (KSPAEV), 563–568 (KSPAEV), 569–574 (KSPAEA), 575–580 (KSPAEA), 581–586 (KSPAEV), 587–592 (KSPATV), 593–598 (KSPGEA), 599–604 (KSPAEA), 605–610 (KSPAEV), 611–616 (KSPVEA), 617–622 (KSPAEA), 623–628 (KSPASV), 629–634 (KSPGEA), 635–640 (KSPAEA), 641–646 (KSPAEV), 647–652 (KSPATV), 653–658 (KSPVEA), 659–664 (KSPAEV), 665–670 (KSPVTV), 671–676 (KSPAEA), 677–682 (KSPVEV), 683–688 (KSPASV), 689–694 (KSPSEA), 695–700 (KSPAGA), 701–706 (KSPAEA), 707–712 (KSPVVA), 713–718 (KSPAEA), and 719–724 (KSPAEA). Phosphoserine is present on residues S516, S522, S528, S534, S540, S546, S552, S558, S564, S570, S576, S582, S588, S594, S600, S606, S612, S618, S624, S627, S630, S636, S642, S648, S654, S660, S666, S672, S678, S684, S687, S690, S696, S702, S708, S714, and S720. Positions 600-620 (SPAEAKSPAEVKSPVEAKSPA) are enriched in basic and acidic residues. Positions 621 to 631 (EAKSPASVKSP) are enriched in low complexity. Basic and acidic residues predominate over residues 720–774 (SPAEAKPPAEAKSPAEAKSPAEAKSPAEAKSPAEAKSPVEVKSPEKAKSPVKEGA). The stretch at 725–730 (KPPAEA) is one 37; approximate repeat. 7 repeat units span residues 731 to 736 (KSPAEA), 737 to 742 (KSPAEA), 743 to 748 (KSPAEA), 749 to 754 (KSPAEA), 755 to 760 (KSPVEV), 761 to 766 (KSPEKA), and 767 to 772 (KSPVKE). 6 positions are modified to phosphoserine: S732, S738, S744, S750, S756, and S762. Residues 775 to 780 (KSLAEA) form a 45; approximate repeat. S776, S782, and S788 each carry phosphoserine. 2 repeat units span residues 781–786 (KSPEKA) and 787–792 (KSPVKE). Composition is skewed to basic and acidic residues over residues 781–953 (KSPE…KAAA) and 963–1072 (GVKE…KGDK). One copy of the 48; approximate repeat lies at 795-800 (KPPAEV). 4 repeat units span residues 801-806 (KSPEKA), 807-812 (KSPMKE), 815-820 (KSPEKA), and 826-831 (KSPEAK). Phosphoserine is present on residues S802, S808, S816, and S827. At T832 the chain carries Phosphothreonine. Phosphoserine is present on residues S846, S852, S860, S880, and S937. Repeat copies occupy residues 851–856 (KSPAKE), 859–864 (KSPEKE), and 879–884 (KSPVEE).

Belongs to the intermediate filament family. Forms heterodimers with NEFL; which can further hetero-oligomerize (in vitro). Forms heterodimers with INA (in vitro). There are a number of repeats of the tripeptide K-S-P, NFH is phosphorylated on a number of the serines in this motif. It is thought that phosphorylation of NFH results in the formation of interfilament cross bridges that are important in the maintenance of axonal caliber. Post-translationally, phosphorylation seems to play a major role in the functioning of the larger neurofilament polypeptides (NF-M and NF-H), the levels of phosphorylation being altered developmentally and coincidentally with a change in the neurofilament function. In terms of processing, phosphorylated in the head and rod regions by the PKC kinase PKN1, leading to the inhibition of polymerization. In terms of tissue distribution, expressed in the dorsal root ganglion neurons (at protein level). Expressed in cutaneous and muscular sensory neurons.

It is found in the cytoplasm. It localises to the cytoskeleton. The protein resides in the cell projection. Its subcellular location is the axon. Functionally, neurofilaments usually contain three intermediate filament proteins: NEFL, NEFM, and NEFH which are involved in the maintenance of neuronal caliber. NEFH has an important function in mature axons that is not subserved by the two smaller NEF proteins. May additionally cooperate with the neuronal intermediate filament proteins PRPH and INA to form neuronal filamentous networks. In Rattus norvegicus (Rat), this protein is Neurofilament heavy polypeptide (Nefh).